Reading from the N-terminus, the 275-residue chain is Phosphonoacetaldehyde hydrolase (275 aa).

The Nucleophile role is filled by aspartate 15. Positions 15 and 17 each coordinate Mg(2+). Residue lysine 56 is the Schiff-base intermediate with substrate of the active site. Position 189 (aspartate 189) interacts with Mg(2+).

The protein belongs to the HAD-like hydrolase superfamily. PhnX family. As to quaternary structure, homodimer. Requires Mg(2+) as cofactor.

It carries out the reaction phosphonoacetaldehyde + H2O = acetaldehyde + phosphate + H(+). Its function is as follows. Involved in phosphonate degradation. In Pseudomonas aeruginosa (strain UCBPP-PA14), this protein is Phosphonoacetaldehyde hydrolase.